The sequence spans 213 residues: Ribosomal RNA small subunit methyltransferase G (213 aa).

Residues G75, F80, 128 to 129, and R144 contribute to the S-adenosyl-L-methionine site; that span reads IE.

This sequence belongs to the methyltransferase superfamily. RNA methyltransferase RsmG family.

It is found in the cytoplasm. The enzyme catalyses guanosine(527) in 16S rRNA + S-adenosyl-L-methionine = N(7)-methylguanosine(527) in 16S rRNA + S-adenosyl-L-homocysteine. Specifically methylates the N7 position of guanine in position 527 of 16S rRNA. This Brucella suis biovar 1 (strain 1330) protein is Ribosomal RNA small subunit methyltransferase G.